The following is a 105-amino-acid chain: Pyrimidine/purine nucleoside phosphorylase (105 aa).

This sequence belongs to the nucleoside phosphorylase PpnP family.

It carries out the reaction a purine D-ribonucleoside + phosphate = a purine nucleobase + alpha-D-ribose 1-phosphate. The enzyme catalyses adenosine + phosphate = alpha-D-ribose 1-phosphate + adenine. The catalysed reaction is cytidine + phosphate = cytosine + alpha-D-ribose 1-phosphate. It catalyses the reaction guanosine + phosphate = alpha-D-ribose 1-phosphate + guanine. It carries out the reaction inosine + phosphate = alpha-D-ribose 1-phosphate + hypoxanthine. The enzyme catalyses thymidine + phosphate = 2-deoxy-alpha-D-ribose 1-phosphate + thymine. The catalysed reaction is uridine + phosphate = alpha-D-ribose 1-phosphate + uracil. It catalyses the reaction xanthosine + phosphate = alpha-D-ribose 1-phosphate + xanthine. In terms of biological role, catalyzes the phosphorolysis of diverse nucleosides, yielding D-ribose 1-phosphate and the respective free bases. Can use uridine, adenosine, guanosine, cytidine, thymidine, inosine and xanthosine as substrates. Also catalyzes the reverse reactions. The sequence is that of Pyrimidine/purine nucleoside phosphorylase from Clostridioides difficile (strain 630) (Peptoclostridium difficile).